We begin with the raw amino-acid sequence, 130 residues long: Small ribosomal subunit protein uS9 (130 aa).

This sequence belongs to the universal ribosomal protein uS9 family.

The sequence is that of Small ribosomal subunit protein uS9 from Pseudomonas paraeruginosa (strain DSM 24068 / PA7) (Pseudomonas aeruginosa (strain PA7)).